We begin with the raw amino-acid sequence, 265 residues long: Shikimate dehydrogenase (NADP(+)) (265 aa).

Shikimate contacts are provided by residues 15–17 (SKS) and T62. K66 serves as the catalytic Proton acceptor. Residues N87 and D102 each contribute to the shikimate site. NADP(+) contacts are provided by residues 127–131 (GAGGA), 151–156 (NRTVSR), and M212. Residue Y214 coordinates shikimate. Residue G234 coordinates NADP(+).

It belongs to the shikimate dehydrogenase family. Homodimer.

It catalyses the reaction shikimate + NADP(+) = 3-dehydroshikimate + NADPH + H(+). Its pathway is metabolic intermediate biosynthesis; chorismate biosynthesis; chorismate from D-erythrose 4-phosphate and phosphoenolpyruvate: step 4/7. Functionally, involved in the biosynthesis of the chorismate, which leads to the biosynthesis of aromatic amino acids. Catalyzes the reversible NADPH linked reduction of 3-dehydroshikimate (DHSA) to yield shikimate (SA). This chain is Shikimate dehydrogenase (NADP(+)), found in Thiobacillus denitrificans (strain ATCC 25259 / T1).